We begin with the raw amino-acid sequence, 165 residues long: Chemotaxis protein CheW (165 aa).

The protein belongs to the CheW family.

Plays an essential role in chemotaxis signal transduction system in order to colonize the host stomach. The polypeptide is Chemotaxis protein CheW (Helicobacter pylori (strain ATCC 700392 / 26695) (Campylobacter pylori)).